We begin with the raw amino-acid sequence, 327 residues long: MIYQMQMPAKIELDESSHSDSFGKFIAQPLERGYGVTLGNLMRRVLLASLPGTAITGIKIENVYHEFSTIQGVREDVPEIVLNLKKVRFRSQCKRSCKTTVTLVGPMEFTAGVIQPQEGEFEVLNKDLHIATINAGTTVTLDIFIGRGRGYVPAEENRAEGMPLGFIPIDSIFTPIRNVKFTVENTRVGQRTDYEKMILEVETDGSITPDDSISLAGRVISDHVLLFADFSPAEEEYTEEEFKQQDDEFETMRRLLATKIEDLDLSVRSHNCLRLAEIDTLGELVSHKEDELLNYKNFGKKSLTELKEQLDKFDLKFGMDITRYQMK.

Residues 1–231 are alpha N-terminal domain (alpha-NTD); the sequence is MIYQMQMPAK…DHVLLFADFS (231 aa). The tract at residues 247–327 is alpha C-terminal domain (alpha-CTD); sequence DEFETMRRLL…GMDITRYQMK (81 aa).

The protein belongs to the RNA polymerase alpha chain family. As to quaternary structure, homodimer. The RNAP catalytic core consists of 2 alpha, 1 beta, 1 beta' and 1 omega subunit. When a sigma factor is associated with the core the holoenzyme is formed, which can initiate transcription.

The enzyme catalyses RNA(n) + a ribonucleoside 5'-triphosphate = RNA(n+1) + diphosphate. Its function is as follows. DNA-dependent RNA polymerase catalyzes the transcription of DNA into RNA using the four ribonucleoside triphosphates as substrates. This is DNA-directed RNA polymerase subunit alpha from Chlorobium chlorochromatii (strain CaD3).